The primary structure comprises 500 residues: Probable malate:quinone oxidoreductase (500 aa).

Belongs to the MQO family. It depends on FAD as a cofactor.

The enzyme catalyses (S)-malate + a quinone = a quinol + oxaloacetate. It participates in carbohydrate metabolism; tricarboxylic acid cycle; oxaloacetate from (S)-malate (quinone route): step 1/1. The chain is Probable malate:quinone oxidoreductase from Bacillus cereus (strain ZK / E33L).